A 96-amino-acid chain; its full sequence is Large ribosomal subunit protein bL28 (96 aa).

It belongs to the bacterial ribosomal protein bL28 family.

This chain is Large ribosomal subunit protein bL28, found in Methylobacterium sp. (strain 4-46).